The primary structure comprises 193 residues: Thioredoxin M4, chloroplastic (193 aa).

The N-terminal 82 residues, 1-82 (MASLLDSVTV…RIACEAQDTT (82 aa)), are a transit peptide targeting the chloroplast. Residues 83-192 (AAAVEVPNLS…LEKTIERFLV (110 aa)) enclose the Thioredoxin domain. Active-site nucleophile residues include cysteine 116 and cysteine 119. Cysteine 116 and cysteine 119 are disulfide-bonded.

This sequence belongs to the thioredoxin family. Plant M-type subfamily.

The protein resides in the plastid. It is found in the chloroplast stroma. In terms of biological role, thiol-disulfide oxidoreductase involved in the redox regulation of enzyme of the oxidative pentose phosphate pathway. Under reducing conditions, inhibits the glucose-6-phosphate dehydrogenase. This is Thioredoxin M4, chloroplastic from Arabidopsis thaliana (Mouse-ear cress).